The primary structure comprises 353 residues: Quinolinate synthase (353 aa).

Residues H47 and S68 each contribute to the iminosuccinate site. C113 is a binding site for [4Fe-4S] cluster. Residues 139-141 and S156 contribute to the iminosuccinate site; that span reads YAN. C200 serves as a coordination point for [4Fe-4S] cluster. Iminosuccinate is bound by residues 226–228 and T243; that span reads HPE. C297 contributes to the [4Fe-4S] cluster binding site.

Belongs to the quinolinate synthase family. Type 1 subfamily. Requires [4Fe-4S] cluster as cofactor.

Its subcellular location is the cytoplasm. It carries out the reaction iminosuccinate + dihydroxyacetone phosphate = quinolinate + phosphate + 2 H2O + H(+). The protein operates within cofactor biosynthesis; NAD(+) biosynthesis; quinolinate from iminoaspartate: step 1/1. In terms of biological role, catalyzes the condensation of iminoaspartate with dihydroxyacetone phosphate to form quinolinate. The chain is Quinolinate synthase from Pectobacterium carotovorum subsp. carotovorum (strain PC1).